A 387-amino-acid chain; its full sequence is MKFVDEAIIRVEAGNGGSGCVSFRREKYVPDGGPDGGDGGDGGSVYLQADENLNTLITYQFERFHIAERGKNGRGRDCTGHGGEDLILKVPVGTRAIDNDTEESLGDLTTHGQKLLVAKGGFHGLGNTRFKSSTNRAPRQKTLGTDGEVRSLKLELLLLADVGLLGMPNAGKSTFIRSVSKAKPKVADYPFTTLVPNLGVVNPRPGQSFVIADIPGLIEGAADGAGLGVQFLKHLERCRVLLHILDVEPIDGSDPVEAARAIVAELEKHSPKLAGKPRWLVINKADLMLPEELQERIDRIVKELEWEGDIYTISAYNREGTAELALKLLDFIDSLPPEEEVDADAEVEFKWDNYHQNANDSINEDFNDDFDDDFDEDDYDVEIIYQR.

One can recognise an Obg domain in the interval 1-159 (MKFVDEAIIR…RSLKLELLLL (159 aa)). In terms of domain architecture, OBG-type G spans 160–333 (ADVGLLGMPN…LALKLLDFID (174 aa)). GTP-binding positions include 166 to 173 (GMPNAGKS), 191 to 195 (FTTLV), 213 to 216 (DIPG), 283 to 286 (NKAD), and 314 to 316 (SAY). The Mg(2+) site is built by serine 173 and threonine 193.

The protein belongs to the TRAFAC class OBG-HflX-like GTPase superfamily. OBG GTPase family. Monomer. The cofactor is Mg(2+).

It localises to the cytoplasm. An essential GTPase which binds GTP, GDP and possibly (p)ppGpp with moderate affinity, with high nucleotide exchange rates and a fairly low GTP hydrolysis rate. Plays a role in control of the cell cycle, stress response, ribosome biogenesis and in those bacteria that undergo differentiation, in morphogenesis control. In Shewanella pealeana (strain ATCC 700345 / ANG-SQ1), this protein is GTPase Obg.